Reading from the N-terminus, the 447-residue chain is Argininosuccinate synthase (447 aa).

ATP contacts are provided by residues 17-25 (AFSGGLDTS) and Ala43. Residue Tyr99 participates in L-citrulline binding. Residues Gly129 and Thr131 each contribute to the ATP site. The L-aspartate site is built by Thr131, Asn135, and Asp136. Asn135 provides a ligand contact to L-citrulline. Asp136 contacts ATP. Positions 139 and 192 each coordinate L-citrulline. An ATP-binding site is contributed by Asp194. L-citrulline-binding residues include Thr201, Glu203, and Glu280.

This sequence belongs to the argininosuccinate synthase family. Type 2 subfamily. As to quaternary structure, homotetramer.

It is found in the cytoplasm. It carries out the reaction L-citrulline + L-aspartate + ATP = 2-(N(omega)-L-arginino)succinate + AMP + diphosphate + H(+). It functions in the pathway amino-acid biosynthesis; L-arginine biosynthesis; L-arginine from L-ornithine and carbamoyl phosphate: step 2/3. The sequence is that of Argininosuccinate synthase from Escherichia coli O127:H6 (strain E2348/69 / EPEC).